A 102-amino-acid chain; its full sequence is Monothiol glutaredoxin-S9 (102 aa).

Positions 1–101 constitute a Glutaredoxin domain; it reads MDKVVRMSSE…PLVKPFQANL (101 aa). Cys21 is a [2Fe-2S] cluster binding site.

The protein belongs to the glutaredoxin family. CC-type subfamily.

It localises to the cytoplasm. May only reduce GSH-thiol disulfides, but not protein disulfides. This chain is Monothiol glutaredoxin-S9 (GRXS9), found in Arabidopsis thaliana (Mouse-ear cress).